The following is a 374-amino-acid chain: MSVALFCGPPPAVSFGCKDGRGRKGMVRSKDIVRQTVKPPAHACRLIGWNKYPGSVVPTNSSLSPSPTALDDEIELDPSPFLIIYKDGRIERLKGTTVIPACPEVATKDVIIDPATGVSVRLYLPNVVDLPSKKLPVLVYFHGGGFVIENTGSPNYHNYLTLLAAKSGLLIVSVNYRLAPEHPIPASFDDCMAGFNWVVSHSAGPAPEPWLARHGDLTQILISGDSAGGTVTHYVLLRADAGVIEGAALVHPYFLGSKRLENQTEEDFEFHEKLWRLSTPDTEGLDDPLINPLAPGAPSLAGLKCKRAVVFVAELDFLVERGRMYYDALVKSGWGGEAELVHQKGVGHVFHLSDYSGDVSVDMMAKMVAFLRGE.

Residues 1 to 68 (MSVALFCGPP…TNSSLSPSPT (68 aa)) constitute an amyloplast transit peptide. Residue S226 is the Acyl-ester intermediate of the active site. Catalysis depends on charge relay system residues D316 and H348.

It belongs to the AB hydrolase superfamily. In terms of assembly, homodimer.

The protein localises to the plastid. It is found in the amyloplast. It carries out the reaction 6-tuliposide A = tulipalin A + D-glucose. Functionally, lactone-forming carboxylesterases, specifically catalyzing intramolecular transesterification, but not hydrolysis. Involved in the biosynthesis of tulipalins, defensive chemicals that show antimicrobial activities against a broad range of strains of bacteria and fungi. Substrates are 6-tuliposide A &gt; 6-tuliposide B. The chain is Probable tuliposide A-converting enzyme b6, amyloplastic (TCEA-B6) from Tulipa gesneriana (Garden tulip).